A 319-amino-acid polypeptide reads, in one-letter code: Beta-ketoacyl-[acyl-carrier-protein] synthase III (319 aa).

Residues Cys112 and His246 contribute to the active site. The tract at residues 247–251 (QANFR) is ACP-binding. Asn276 is an active-site residue.

Belongs to the thiolase-like superfamily. FabH family. As to quaternary structure, homodimer.

The protein resides in the cytoplasm. It catalyses the reaction malonyl-[ACP] + acetyl-CoA + H(+) = 3-oxobutanoyl-[ACP] + CO2 + CoA. It functions in the pathway lipid metabolism; fatty acid biosynthesis. Its function is as follows. Catalyzes the condensation reaction of fatty acid synthesis by the addition to an acyl acceptor of two carbons from malonyl-ACP. Catalyzes the first condensation reaction which initiates fatty acid synthesis and may therefore play a role in governing the total rate of fatty acid production. Possesses both acetoacetyl-ACP synthase and acetyl transacylase activities. Its substrate specificity determines the biosynthesis of branched-chain and/or straight-chain of fatty acids. The sequence is that of Beta-ketoacyl-[acyl-carrier-protein] synthase III from Shewanella oneidensis (strain ATCC 700550 / JCM 31522 / CIP 106686 / LMG 19005 / NCIMB 14063 / MR-1).